We begin with the raw amino-acid sequence, 150 residues long: Putative pre-16S rRNA nuclease (150 aa).

This sequence belongs to the YqgF nuclease family.

The protein localises to the cytoplasm. Could be a nuclease involved in processing of the 5'-end of pre-16S rRNA. The protein is Putative pre-16S rRNA nuclease of Syntrophus aciditrophicus (strain SB).